A 270-amino-acid polypeptide reads, in one-letter code: Indole-3-glycerol phosphate synthase (270 aa).

This sequence belongs to the TrpC family.

The catalysed reaction is 1-(2-carboxyphenylamino)-1-deoxy-D-ribulose 5-phosphate + H(+) = (1S,2R)-1-C-(indol-3-yl)glycerol 3-phosphate + CO2 + H2O. Its pathway is amino-acid biosynthesis; L-tryptophan biosynthesis; L-tryptophan from chorismate: step 4/5. The polypeptide is Indole-3-glycerol phosphate synthase (Salinibacter ruber (strain DSM 13855 / M31)).